The following is an 813-amino-acid chain: Leucine--tRNA ligase (813 aa).

The 'HIGH' region motif lies at 41–51 (PYPSGTLHMGH). A 'KMSKS' region motif is present at residues 575 to 579 (KMSKS). Lys578 contributes to the ATP binding site.

Belongs to the class-I aminoacyl-tRNA synthetase family.

The protein localises to the cytoplasm. The enzyme catalyses tRNA(Leu) + L-leucine + ATP = L-leucyl-tRNA(Leu) + AMP + diphosphate. The chain is Leucine--tRNA ligase from Francisella philomiragia subsp. philomiragia (strain ATCC 25017 / CCUG 19701 / FSC 153 / O#319-036).